A 316-amino-acid polypeptide reads, in one-letter code: SWR complex protein 2 (316 aa).

Disordered regions lie at residues 1-81 (MSAT…GEEV), 93-127 (KRKI…KKKY), and 153-180 (ETRL…TMTQ). Residues 20–31 (KMRELLEKEHLR) show a composition bias toward basic and acidic residues. A coiled-coil region spans residues 20 to 95 (KMRELLEKEH…RDEERIKKRK (76 aa)). The span at 40-56 (EKEDEEYNIEEEEEAER) shows a compositional bias: acidic residues. 2 positions are modified to phosphoserine: Ser-64 and Ser-65. Residues 70–81 (ELKKLEEEGEEV) show a composition bias toward basic and acidic residues. Over residues 167-180 (VSASANRQKGTMTQ) the composition is skewed to polar residues.

This sequence belongs to the VPS72/YL1 family. Component of the SWR1 chromatin-remodeling complex.

It is found in the nucleus. In terms of biological role, participates in the catalytic exchange of histone H2A for the H2A variant pht1, an euchromatin-specific factor, leading to chromatin remodeling and changes in transcription of targeted genes. This is SWR complex protein 2 (swc2) from Schizosaccharomyces pombe (strain 972 / ATCC 24843) (Fission yeast).